The sequence spans 174 residues: Nascent polypeptide-associated complex subunit alpha (174 aa).

Ser-2 carries the post-translational modification N-acetylserine. Residues 14-78 enclose the NAC-A/B domain; that stretch reads NKNEKKAREL…AKVDNFTQKL (65 aa). The interval 85–137 is disordered; that stretch reads AQASGIMPSNEDVATKSPEDIQADMQAAAEGSVNAAAEEDDEEGEVDAGDLNK. At Ser-93 the chain carries Phosphoserine. Low complexity predominate over residues 111 to 120; that stretch reads AAAEGSVNAA. The segment covering 121–132 has biased composition (acidic residues); that stretch reads AEEDDEEGEVDA. Positions 135 to 174 constitute a UBA domain; that stretch reads LNKDDIELVVQQTNVSKNQAIKALKAHNGDLVNAIMSLSK.

It belongs to the NAC-alpha family. In terms of assembly, part of the nascent polypeptide-associated complex (NAC), consisting of EGD2 and either EGD1 or BTT1. NAC associates with ribosomes via EGD1 or BTT1, and with the CCR4-NOT complex.

The protein localises to the cytoplasm. It localises to the nucleus. Functionally, component of the nascent polypeptide-associated complex (NAC), a dynamic component of the ribosomal exit tunnel, protecting the emerging polypeptides from interaction with other cytoplasmic proteins to ensure appropriate nascent protein targeting. The NAC complex also promotes mitochondrial protein import by enhancing productive ribosome interactions with the outer mitochondrial membrane and blocks the inappropriate interaction of ribosomes translating non-secretory nascent polypeptides with translocation sites in the membrane of the endoplasmic reticulum. EGD2 may also be involved in transcription regulation. This chain is Nascent polypeptide-associated complex subunit alpha (EGD2), found in Saccharomyces cerevisiae (strain YJM789) (Baker's yeast).